Here is a 440-residue protein sequence, read N- to C-terminus: Xaa-Pro dipeptidase (440 aa).

Mn(2+)-binding residues include Asp244, Asp255, His335, Glu380, and Glu419.

This sequence belongs to the peptidase M24B family. Bacterial-type prolidase subfamily. It depends on Mn(2+) as a cofactor.

The catalysed reaction is Xaa-L-Pro dipeptide + H2O = an L-alpha-amino acid + L-proline. Functionally, splits dipeptides with a prolyl residue in the C-terminal position. This chain is Xaa-Pro dipeptidase, found in Shewanella denitrificans (strain OS217 / ATCC BAA-1090 / DSM 15013).